Here is a 390-residue protein sequence, read N- to C-terminus: Nucleotide-sugar uncharacterized transporter 1 (390 aa).

10 consecutive transmembrane segments (helical) span residues 61–81, 89–109, 128–148, 155–175, 182–201, 206–228, 249–269, 278–298, 306–326, and 329–349; these read ICGP…IIFM, IGFE…YLLM, SLLP…LANV, VGFY…AEFL, SFMK…VATV, FSLF…KILW, ITLL…ALSF, AILV…LALG, VVLG…IFGS, and GFIS…YTYL. Over residues 356–365 the composition is skewed to low complexity; sequence LKTSSSSSAL. The interval 356–390 is disordered; sequence LKTSSSSSALSEKKSRFSDLKDDDKNLEPYGSEAV. Over residues 366 to 382 the composition is skewed to basic and acidic residues; sequence SEKKSRFSDLKDDDKNL.

Belongs to the TPT transporter family. TPT (TC 2.A.7.9) subfamily.

It is found in the membrane. The protein is Nucleotide-sugar uncharacterized transporter 1 of Arabidopsis thaliana (Mouse-ear cress).